The sequence spans 218 residues: Small ribosomal subunit protein uS3 (218 aa).

Residues 38 to 106 (IREFINQRLS…RVHINILEIK (69 aa)) enclose the KH type-2 domain.

This sequence belongs to the universal ribosomal protein uS3 family. As to quaternary structure, part of the 30S ribosomal subunit. Forms a tight complex with proteins S10 and S14.

Its function is as follows. Binds the lower part of the 30S subunit head. Binds mRNA in the 70S ribosome, positioning it for translation. The sequence is that of Small ribosomal subunit protein uS3 from Bacillus licheniformis (strain ATCC 14580 / DSM 13 / JCM 2505 / CCUG 7422 / NBRC 12200 / NCIMB 9375 / NCTC 10341 / NRRL NRS-1264 / Gibson 46).